An 801-amino-acid chain; its full sequence is Probable inorganic carbon transporter subunit DabA (801 aa).

Residues cysteine 298, aspartate 300, histidine 481, and cysteine 496 each contribute to the Zn(2+) site. The segment at 575–596 (RENAAAERAESMGSDASSGVSE) is disordered.

It belongs to the inorganic carbon transporter (TC 9.A.2) DabA family. Forms a complex with DabB. The cofactor is Zn(2+).

It is found in the cell membrane. Functionally, part of an energy-coupled inorganic carbon pump. This Haloarcula marismortui (strain ATCC 43049 / DSM 3752 / JCM 8966 / VKM B-1809) (Halobacterium marismortui) protein is Probable inorganic carbon transporter subunit DabA.